The following is a 184-amino-acid chain: Photosystem I assembly protein Ycf4 (184 aa).

A run of 2 helical transmembrane segments spans residues 22-42 (FGWACILFLGSLGFLVVGASS) and 57-77 (IVFFPQGIVMSFYGIAGLFIS).

Belongs to the Ycf4 family.

It localises to the plastid. The protein resides in the chloroplast thylakoid membrane. Seems to be required for the assembly of the photosystem I complex. The protein is Photosystem I assembly protein Ycf4 of Acorus calamus (Sweet flag).